The sequence spans 448 residues: Mitochondrial distribution and morphology protein 10 (448 aa).

Disordered regions lie at residues 101–126 (QIHPPLAPESPNESRHAEPNERSEKA) and 366–386 (PPLPPSPVKGTSASAVTPAGE). Positions 112–126 (NESRHAEPNERSEKA) are enriched in basic and acidic residues.

It belongs to the MDM10 family. In terms of assembly, component of the ER-mitochondria encounter structure (ERMES) or MDM complex, composed of MMM1, MDM10, MDM12 and MDM34. Associates with the mitochondrial outer membrane sorting assembly machinery SAM(core) complex.

The protein localises to the mitochondrion outer membrane. Functionally, component of the ERMES/MDM complex, which serves as a molecular tether to connect the endoplasmic reticulum and mitochondria. Components of this complex are involved in the control of mitochondrial shape and protein biogenesis and may function in phospholipid exchange. MDM10 is involved in the late assembly steps of the general translocase of the mitochondrial outer membrane (TOM complex). Functions in the TOM40-specific route of the assembly of outer membrane beta-barrel proteins, including the association of TOM40 with the receptor TOM22 and small TOM proteins. Can associate with the SAM(core) complex as well as the MDM12-MMM1 complex, both involved in late steps of the major beta-barrel assembly pathway, that is responsible for biogenesis of all outer membrane beta-barrel proteins. May act as a switch that shuttles between both complexes and channels precursor proteins into the TOM40-specific pathway. Plays a role in mitochondrial morphology and in the inheritance of mitochondria. The chain is Mitochondrial distribution and morphology protein 10 from Coccidioides immitis (strain RS) (Valley fever fungus).